A 296-amino-acid polypeptide reads, in one-letter code: GTPase Era (296 aa).

In terms of domain architecture, Era-type G spans 3–170; that stretch reads KSGFITIVGR…LELMVKYLPE (168 aa). The interval 11–18 is G1; sequence GRPNVGKS. 11-18 contacts GTP; it reads GRPNVGKS. The interval 37–41 is G2; the sequence is QTTRN. The interval 58–61 is G3; it reads DTPG. GTP contacts are provided by residues 58-62 and 120-123; these read DTPGI and NKVD. A G4 region spans residues 120–123; it reads NKVD. The interval 149-151 is G5; sequence ISA. One can recognise a KH type-2 domain in the interval 201-278; the sequence is LSQEVPHGIA…NIKIWVKVRK (78 aa).

It belongs to the TRAFAC class TrmE-Era-EngA-EngB-Septin-like GTPase superfamily. Era GTPase family. Monomer.

It localises to the cytoplasm. Its subcellular location is the cell membrane. Its function is as follows. An essential GTPase that binds both GDP and GTP, with rapid nucleotide exchange. Plays a role in 16S rRNA processing and 30S ribosomal subunit biogenesis and possibly also in cell cycle regulation and energy metabolism. This is GTPase Era from Clostridium perfringens (strain 13 / Type A).